Consider the following 106-residue polypeptide: Immunoglobulin lambda constant 6 (106 aa).

The Ig-like domain occupies 7-101 (PSVTLFPPSS…EGSTVEKTVA (95 aa)). Cysteines 28 and 87 form a disulfide.

In terms of assembly, immunoglobulins are composed of two identical heavy chains and two identical light chains; disulfide-linked.

It localises to the secreted. Its subcellular location is the cell membrane. Its function is as follows. Constant region of immunoglobulin light chains. Immunoglobulins, also known as antibodies, are membrane-bound or secreted glycoproteins produced by B lymphocytes. In the recognition phase of humoral immunity, the membrane-bound immunoglobulins serve as receptors which, upon binding of a specific antigen, trigger the clonal expansion and differentiation of B lymphocytes into immunoglobulins-secreting plasma cells. Secreted immunoglobulins mediate the effector phase of humoral immunity, which results in the elimination of bound antigens. The antigen binding site is formed by the variable domain of one heavy chain, together with that of its associated light chain. Thus, each immunoglobulin has two antigen binding sites with remarkable affinity for a particular antigen. The variable domains are assembled by a process called V-(D)-J rearrangement and can then be subjected to somatic hypermutations which, after exposure to antigen and selection, allow affinity maturation for a particular antigen. The polypeptide is Immunoglobulin lambda constant 6 (Homo sapiens (Human)).